The chain runs to 357 residues: MDDHDDSPVSPSFLKSDGEIEASLRPKSLDDFIGQPRVREQLALVLRGAKQRGSTPDHVLLSGPPGLGKTSMAMIIAAELGTALRITSGPALERAGDLAAMLSNLVEGDVLFIDEIHRIARPAEEMLYLAMEDFRVDVVVGKGPGATSIPLDIAPFTLVGATTRSGALTGPLRDRFGFTGHMDFYEPGELLRILERSAQILGVRIETDAAAEIAGRSRGTPRIANRLLRRVRDYAEVRADGIVTLPVARAALEVYDVDTLGLDRLDRAVLDALVRGFHGGPVGVSTLAVAVGEEATTVEEVCEPFLVRAGLVARTPRGRVATAAAWEHLGLVPPPDLVFGSIEVRGRTSQPTLDLFD.

The disordered stretch occupies residues 1–20 (MDDHDDSPVSPSFLKSDGEI). The interval 1–185 (MDDHDDSPVS…FGFTGHMDFY (185 aa)) is large ATPase domain (RuvB-L). ATP is bound by residues Leu24, Arg25, Gly66, Lys69, Thr70, Ser71, 132–134 (EDF), Arg175, Tyr185, and Arg222. Position 70 (Thr70) interacts with Mg(2+). The interval 186–256 (EPGELLRILE…VARAALEVYD (71 aa)) is small ATPAse domain (RuvB-S). Residues 259–357 (TLGLDRLDRA…TSQPTLDLFD (99 aa)) form a head domain (RuvB-H) region. Residues Arg314 and Arg319 each contribute to the DNA site.

Belongs to the RuvB family. Homohexamer. Forms an RuvA(8)-RuvB(12)-Holliday junction (HJ) complex. HJ DNA is sandwiched between 2 RuvA tetramers; dsDNA enters through RuvA and exits via RuvB. An RuvB hexamer assembles on each DNA strand where it exits the tetramer. Each RuvB hexamer is contacted by two RuvA subunits (via domain III) on 2 adjacent RuvB subunits; this complex drives branch migration. In the full resolvosome a probable DNA-RuvA(4)-RuvB(12)-RuvC(2) complex forms which resolves the HJ.

It is found in the cytoplasm. It carries out the reaction ATP + H2O = ADP + phosphate + H(+). In terms of biological role, the RuvA-RuvB-RuvC complex processes Holliday junction (HJ) DNA during genetic recombination and DNA repair, while the RuvA-RuvB complex plays an important role in the rescue of blocked DNA replication forks via replication fork reversal (RFR). RuvA specifically binds to HJ cruciform DNA, conferring on it an open structure. The RuvB hexamer acts as an ATP-dependent pump, pulling dsDNA into and through the RuvAB complex. RuvB forms 2 homohexamers on either side of HJ DNA bound by 1 or 2 RuvA tetramers; 4 subunits per hexamer contact DNA at a time. Coordinated motions by a converter formed by DNA-disengaged RuvB subunits stimulates ATP hydrolysis and nucleotide exchange. Immobilization of the converter enables RuvB to convert the ATP-contained energy into a lever motion, pulling 2 nucleotides of DNA out of the RuvA tetramer per ATP hydrolyzed, thus driving DNA branch migration. The RuvB motors rotate together with the DNA substrate, which together with the progressing nucleotide cycle form the mechanistic basis for DNA recombination by continuous HJ branch migration. Branch migration allows RuvC to scan DNA until it finds its consensus sequence, where it cleaves and resolves cruciform DNA. The chain is Holliday junction branch migration complex subunit RuvB from Nocardia farcinica (strain IFM 10152).